The primary structure comprises 566 residues: CTP synthase (566 aa).

Positions 1-270 (MTKFVFVTGG…DGLICDKLRL (270 aa)) are amidoligase domain. Residue S13 coordinates CTP. Residue S13 participates in UTP binding. ATP is bound by residues 14-19 (SLGKGI) and D71. Residues D71 and E144 each coordinate Mg(2+). Residues 151–153 (DIE), 191–196 (KTKPTQ), and K227 each bind CTP. UTP contacts are provided by residues 191–196 (KTKPTQ) and K227. Positions 295–547 (SIAMVGKYVD…IAATLEQRSA (253 aa)) constitute a Glutamine amidotransferase type-1 domain. G356 serves as a coordination point for L-glutamine. The active-site Nucleophile; for glutamine hydrolysis is C383. L-glutamine-binding positions include 384–387 (LGMQ), E407, and R473. Residues H520 and E522 contribute to the active site.

The protein belongs to the CTP synthase family. In terms of assembly, homotetramer.

It catalyses the reaction UTP + L-glutamine + ATP + H2O = CTP + L-glutamate + ADP + phosphate + 2 H(+). It carries out the reaction L-glutamine + H2O = L-glutamate + NH4(+). The catalysed reaction is UTP + NH4(+) + ATP = CTP + ADP + phosphate + 2 H(+). It participates in pyrimidine metabolism; CTP biosynthesis via de novo pathway; CTP from UDP: step 2/2. With respect to regulation, allosterically activated by GTP, when glutamine is the substrate; GTP has no effect on the reaction when ammonia is the substrate. The allosteric effector GTP functions by stabilizing the protein conformation that binds the tetrahedral intermediate(s) formed during glutamine hydrolysis. Inhibited by the product CTP, via allosteric rather than competitive inhibition. Its function is as follows. Catalyzes the ATP-dependent amination of UTP to CTP with either L-glutamine or ammonia as the source of nitrogen. Regulates intracellular CTP levels through interactions with the four ribonucleotide triphosphates. The chain is CTP synthase from Polaromonas naphthalenivorans (strain CJ2).